The sequence spans 368 residues: Histidinol-phosphate aminotransferase 1 (368 aa).

The residue at position 224 (lysine 224) is an N6-(pyridoxal phosphate)lysine.

The protein belongs to the class-II pyridoxal-phosphate-dependent aminotransferase family. Histidinol-phosphate aminotransferase subfamily. In terms of assembly, homodimer. Pyridoxal 5'-phosphate is required as a cofactor.

It carries out the reaction L-histidinol phosphate + 2-oxoglutarate = 3-(imidazol-4-yl)-2-oxopropyl phosphate + L-glutamate. It functions in the pathway amino-acid biosynthesis; L-histidine biosynthesis; L-histidine from 5-phospho-alpha-D-ribose 1-diphosphate: step 7/9. This Rhizobium meliloti (strain 1021) (Ensifer meliloti) protein is Histidinol-phosphate aminotransferase 1 (hisC1).